We begin with the raw amino-acid sequence, 847 residues long: Protein SEY1 (847 aa).

Topologically, residues 1–720 are cytoplasmic; the sequence is MSSGEPLSET…KRSIVQHVTQ (720 aa). The GB1/RHD3-type G domain maps to 55–290; that stretch reads GHNYHIVAVF…VENDIFKPEY (236 aa). Residue 65-72 participates in GTP binding; the sequence is GSQSTGKS. A helical membrane pass occupies residues 721 to 741; sequence IPYYIYIIILLLGWNEFMAVV. Over 742 to 744 the chain is Lumenal; it reads RNP. A helical membrane pass occupies residues 745–765; that stretch reads FTFSLAIILGASLYILYTMNL. The Cytoplasmic segment spans residues 766 to 847; that stretch reads LKPALTVTQR…VTSLNVVEEE (82 aa).

It belongs to the TRAFAC class dynamin-like GTPase superfamily. GB1/RHD3 GTPase family. RHD3 subfamily.

It localises to the endoplasmic reticulum membrane. Functionally, cooperates with the reticulon proteins and tubule-shaping DP1 family proteins to generate and maintain the structure of the tubular endoplasmic reticulum network. Has GTPase activity, which is required for its function in ER organization. The chain is Protein SEY1 from Lodderomyces elongisporus (strain ATCC 11503 / CBS 2605 / JCM 1781 / NBRC 1676 / NRRL YB-4239) (Yeast).